The sequence spans 114 residues: Large ribosomal subunit protein bL20c (114 aa).

This sequence belongs to the bacterial ribosomal protein bL20 family.

It localises to the plastid. The protein resides in the chloroplast. Binds directly to 23S ribosomal RNA and is necessary for the in vitro assembly process of the 50S ribosomal subunit. It is not involved in the protein synthesizing functions of that subunit. The polypeptide is Large ribosomal subunit protein bL20c (rpl20) (Trieres chinensis (Marine centric diatom)).